The sequence spans 372 residues: Innexin-16 (372 aa).

A run of 4 helical transmembrane segments spans residues 31–51 (VVTT…NYVG), 106–126 (VPFL…FWII), 181–201 (LVMK…LNSF), and 263–283 (IFIF…GDFV). An N-linked (GlcNAc...) asparagine glycan is attached at Asn352.

Belongs to the pannexin family.

It is found in the cell membrane. It localises to the cell junction. Its subcellular location is the gap junction. Its function is as follows. Structural component of the gap junctions. Required for signals downstream of defecation clock. This chain is Innexin-16 (inx-16), found in Caenorhabditis elegans.